The following is a 901-amino-acid chain: HTH-type transcriptional regulator MalT (901 aa).

Residue 39–46 (SPAGYGKT) coordinates ATP. One can recognise an HTH luxR-type domain in the interval 829–894 (ELIRTSPLTQ…AAVQHAQKLL (66 aa)). Positions 853-872 (NEQIAGELEVAATTIKTHIR) form a DNA-binding region, H-T-H motif.

The protein belongs to the MalT family. As to quaternary structure, monomer in solution. Oligomerizes to an active state in the presence of the positive effectors ATP and maltotriose.

Activated by ATP and maltotriose, which are both required for DNA binding. Its function is as follows. Positively regulates the transcription of the maltose regulon whose gene products are responsible for uptake and catabolism of malto-oligosaccharides. Specifically binds to the promoter region of its target genes, recognizing a short DNA motif called the MalT box. The polypeptide is HTH-type transcriptional regulator MalT (Escherichia coli O7:K1 (strain IAI39 / ExPEC)).